The sequence spans 304 residues: Ribonuclease Z (304 aa).

Zn(2+) contacts are provided by histidine 63, histidine 65, aspartate 67, histidine 68, histidine 143, aspartate 213, and histidine 271. The active-site Proton acceptor is the aspartate 67.

It belongs to the RNase Z family. In terms of assembly, homodimer. It depends on Zn(2+) as a cofactor.

It carries out the reaction Endonucleolytic cleavage of RNA, removing extra 3' nucleotides from tRNA precursor, generating 3' termini of tRNAs. A 3'-hydroxy group is left at the tRNA terminus and a 5'-phosphoryl group is left at the trailer molecule.. Its function is as follows. Zinc phosphodiesterase, which displays some tRNA 3'-processing endonuclease activity. Probably involved in tRNA maturation, by removing a 3'-trailer from precursor tRNA. The protein is Ribonuclease Z of Porphyromonas gingivalis (strain ATCC BAA-308 / W83).